We begin with the raw amino-acid sequence, 380 residues long: cAMP-dependent protein kinase type I-alpha regulatory subunit (380 aa).

An N-acetylmethionine modification is found at methionine 1. An N-acetylalanine; in cAMP-dependent protein kinase type I-alpha regulatory subunit, N-terminally processed modification is found at alanine 2. The tract at residues 2–135 (ASGTTASEEE…ALAKAIEKNV (134 aa)) is dimerization and phosphorylation. Serine 3, serine 76, and serine 82 each carry phosphoserine. The interval 64 to 96 (IQNLQKAGSRADSREDEISPPPPNPVVKGRRRR) is disordered. The Pseudophosphorylation motif signature appears at 95–99 (RRGAI). Serine 100 carries the phosphoserine modification. 3',5'-cyclic AMP contacts are provided by residues 136–253 (LFSH…SKVS), glutamate 201, arginine 210, 254–380 (ILES…SLSV), glutamate 325, and arginine 334. Serine 257 carries the phosphoserine modification.

The protein belongs to the cAMP-dependent kinase regulatory chain family. The inactive holoenzyme is composed of two regulatory chains and two catalytic chains. Activation by cAMP releases the two active catalytic monomers and the regulatory dimer. Interacts with PRKACA and PRKACB. PRKAR1A also interacts with RFC2; the complex may be involved in cell survival. Interacts with AKAP4. Interacts with RARA; the interaction occurs in the presence of cAMP or FSH and regulates RARA transcriptional activity. Interacts with the phosphorylated form of PJA2. Interacts with CBFA2T3. Interacts with PRKX; regulates this cAMP-dependent protein kinase. Interacts with smAKAP; this interaction may target PRKAR1A to the plasma membrane. Interacts with AICDA. Post-translationally, the pseudophosphorylation site binds to the substrate-binding region of the catalytic chain, resulting in the inhibition of its activity. The physiological significance of the in vitro phosphorylation of a proximal serine is unclear. Four types of regulatory chains are found: I-alpha, I-beta, II-alpha, and II-beta. Their expression varies among tissues and is in some cases constitutive and in others inducible.

It is found in the cell membrane. Regulatory subunit of the cAMP-dependent protein kinases involved in cAMP signaling in cells. This is cAMP-dependent protein kinase type I-alpha regulatory subunit (PRKAR1A) from Bos taurus (Bovine).